The sequence spans 21 residues: Histone H2B 1 (21 aa).

The disordered stretch occupies residues 1-21 (MPDPAKTAPKKGSKKAVTKXA). An N6-acetyllysine mark is found at lysine 6 and lysine 11. Residues 8–21 (APKKGSKKAVTKXA) are compositionally biased toward basic residues. Serine 13 carries the phosphoserine modification. An N6-acetyllysine mark is found at lysine 14 and lysine 19. Lysine 19 is covalently cross-linked (Glycyl lysine isopeptide (Lys-Gly) (interchain with G-Cter in ubiquitin)).

Belongs to the histone H2B family. In terms of assembly, the nucleosome is a histone octamer containing two molecules each of H2A, H2B, H3 and H4 assembled in one H3-H4 heterotetramer and two H2A-H2B heterodimers. The octamer wraps approximately 147 bp of DNA. Monoubiquitination at the C-terminal Lys gives a specific tag for epigenetic transcriptional activation and is also prerequisite for histone H3 'Lys-4' and 'Lys-79' methylation. In terms of processing, phosphorylated during apoptosis; which facilitates apoptotic chromatin condensation.

The protein resides in the nucleus. It is found in the chromosome. In terms of biological role, core component of nucleosome. Nucleosomes wrap and compact DNA into chromatin, limiting DNA accessibility to the cellular machineries which require DNA as a template. Histones thereby play a central role in transcription regulation, DNA repair, DNA replication and chromosomal stability. DNA accessibility is regulated via a complex set of post-translational modifications of histones, also called histone code, and nucleosome remodeling. Has broad-spectrum antimicrobial and antibacterial activity. It is important in the antimicrobial defenses of fish skin and possesses strong activity against saprolegnia, the most common fungal infection in fish. It is also inhibitory to fish bacterial pathogens, such as aeromonas hydrophila, vibrio alginolyticus and E.coli D31. The protein is Histone H2B 1 of Ictalurus punctatus (Channel catfish).